A 79-amino-acid polypeptide reads, in one-letter code: Gas vesicle protein A2 (79 aa).

The segment at 9–19 (LAEVLDRVLDK) is alpha helix 1. The segment at 23-31 (VDVWARISL) is beta-strand 1. The tract at residues 32–34 (VGI) is beta turn. The tract at residues 35–43 (EILTVEARV) is beta-strand 2. The segment at 48–67 (VDTFLHYAEEIAKIEQAELT) is alpha helix 2.

The protein belongs to the gas vesicle GvpA family. The gas vesicle shell is 2 nm thick and consists of a single layer of this protein. It forms helical ribs nearly perpendicular to the long axis of the vesicle.

Its subcellular location is the gas vesicle shell. Gas vesicles are hollow, gas filled proteinaceous nanostructures found in several microbial planktonic microorganisms. They allow positioning of halobacteria at the optimal depth for growth in the poorly aerated shallow brine pools of their habitat. GvpA forms the gas vesicle shell. This protein can replace the p-gvpA gene in the p-vac locus and increases the critical collapse pressure (CCP) of hybrid gas vesicles from 0.66 MPa to 0.90 MPa. In stationary phase gas vesicles about 30 times more GvpA1 is found than GvpA2. In terms of biological role, expression of 2 c-vac DNA fragments containing 2 divergently transcribed regions (gvpE-gvpF-gvpG-gvpH-gvpI-gvpJ-gvpK-gvpL-gvpM and gvpA-gvpC-gvpN-gvpO) allows H.volcanii to produce gas vesicles. All site-directed mutagenesis is tested in H.volcanii. The chain is Gas vesicle protein A2 from Halobacterium salinarum (strain ATCC 700922 / JCM 11081 / NRC-1) (Halobacterium halobium).